The sequence spans 491 residues: Histamine H1 receptor (491 aa).

At 1-30 (MTCPNSSCVFEDKMCQGNKTAPANDAQLTP) the chain is on the extracellular side. N-linked (GlcNAc...) asparagine glycans are attached at residues Asn5 and Asn18. The helical transmembrane segment at 31–51 (LVVVLSTISLVTVGLNLLVLY) threads the bilayer. Over 52–65 (AVRSERKLHTVGNL) the chain is Cytoplasmic. Residues 66–90 (YIVSLSVADLIVGVVVMPMNILYLL) traverse the membrane as a helical segment. Over 91–98 (MSRWSLGR) the chain is Extracellular. Residues 99-124 (PLCLFWLSMDYVASTASIFSVFILCI) traverse the membrane as a helical segment. A disulfide bridge links Cys101 with Cys181. Histamine-binding residues include Asp108 and Thr113. Residues 108-113 (DYVAST) are important for agonist binding. Topologically, residues 125-145 (DRYRSVQQPLKYLRYRTKTRA) are cytoplasmic. 2 positions are modified to phosphothreonine: Thr141 and Thr143. Residues 146–165 (SITILAAWFLSFLWIIPILG) form a helical membrane-spanning segment. Over 166 to 189 (WRHFQPKTPEPREDKCETDFYNVT) the chain is Extracellular. The chain crosses the membrane as a helical span at residues 190–212 (WFKVMTAIINFYLPTLLMLWFYA). Asn199 contacts histamine. The Cytoplasmic segment spans residues 213-420 (KIYKAVRQHC…MNRERKAAKQ (208 aa)). The residue at position 231 (Ser231) is a Phosphoserine. Disordered regions lie at residues 246–297 (QVGA…KEEK) and 360–385 (QSFSRTDSDTPAEPAPAKGKSRSESS). Over residues 252 to 262 (PGKESPWEVLK) the composition is skewed to basic and acidic residues. Residues Ser384, Ser400, and Ser402 each carry the phosphoserine modification. The helical transmembrane segment at 421–444 (LGFIMAAFIICWIPYFIFFMVIAF) threads the bilayer. The tract at residues 428–432 (FIICW) is important for agonist binding. Position 435 (Tyr435) interacts with histamine. Cys445 and Cys448 are joined by a disulfide. Residues 445 to 450 (CESCCN) lie on the Extracellular side of the membrane. Residues 451–473 (QHVHMFTIWLGYINSTLNPLIYP) traverse the membrane as a helical segment. Residues 474–491 (LCNENFKKTFKKILHIRS) lie on the Cytoplasmic side of the membrane.

The protein belongs to the G-protein coupled receptor 1 family. Post-translationally, phosphorylation at sites in the second and third cytoplasmic loops independently contribute to agonist-induced receptor down-regulation. Brain, lung, small intestine, uterus, adrenal medulla and spleen.

It localises to the cell membrane. G-protein-coupled receptor for histamine, a biogenic amine that functions as an immune modulator and a neurotransmitter. Through the H1 receptor, histamine mediates the contraction of smooth muscles and increases capillary permeability due to contraction of terminal venules. Also mediates neurotransmission in the central nervous system and thereby regulates circadian rhythms, emotional and locomotor activities as well as cognitive functions. The polypeptide is Histamine H1 receptor (Bos taurus (Bovine)).